The sequence spans 180 residues: Bifunctional protein PyrR (180 aa).

The short motif at 101–113 is the PRPP-binding element; sequence VILIDDVLFTGRT.

Belongs to the purine/pyrimidine phosphoribosyltransferase family. PyrR subfamily. In terms of assembly, homodimer and homohexamer; in equilibrium.

It carries out the reaction UMP + diphosphate = 5-phospho-alpha-D-ribose 1-diphosphate + uracil. In terms of biological role, regulates transcriptional attenuation of the pyrimidine nucleotide (pyr) operon by binding in a uridine-dependent manner to specific sites on pyr mRNA. This disrupts an antiterminator hairpin in the RNA and favors formation of a downstream transcription terminator, leading to a reduced expression of downstream genes. Also displays a weak uracil phosphoribosyltransferase activity which is not physiologically significant. The chain is Bifunctional protein PyrR from Oceanobacillus iheyensis (strain DSM 14371 / CIP 107618 / JCM 11309 / KCTC 3954 / HTE831).